The sequence spans 67 residues: DNA-directed RNA polymerase subunit omega (67 aa).

This sequence belongs to the RNA polymerase subunit omega family. In terms of assembly, the RNAP catalytic core consists of 2 alpha, 1 beta, 1 beta' and 1 omega subunit. When a sigma factor is associated with the core the holoenzyme is formed, which can initiate transcription.

It catalyses the reaction RNA(n) + a ribonucleoside 5'-triphosphate = RNA(n+1) + diphosphate. In terms of biological role, promotes RNA polymerase assembly. Latches the N- and C-terminal regions of the beta' subunit thereby facilitating its interaction with the beta and alpha subunits. The protein is DNA-directed RNA polymerase subunit omega (rpoZ) of Treponema pallidum (strain Nichols).